Consider the following 201-residue polypeptide: UPF0301 protein Smed_0532 (201 aa).

Belongs to the UPF0301 (AlgH) family.

This chain is UPF0301 protein Smed_0532, found in Sinorhizobium medicae (strain WSM419) (Ensifer medicae).